We begin with the raw amino-acid sequence, 604 residues long: Prostaglandin G/H synthase 2 (604 aa).

An N-terminal signal peptide occupies residues 1–17; sequence MLFRAVLLCAALGLSQA. Residues 18-55 enclose the EGF-like domain; that stretch reads ANPCCSNPCQNRGECMSTGFDQYKCDCTRTGFYGENCT. 4 disulfide bridges follow: cysteine 21/cysteine 32, cysteine 22/cysteine 145, cysteine 26/cysteine 42, and cysteine 44/cysteine 54. The N-linked (GlcNAc...) asparagine glycan is linked to asparagine 53. Residue arginine 106 participates in substrate binding. A glycan (N-linked (GlcNAc...) asparagine) is linked at asparagine 130. The Proton acceptor role is filled by histidine 193. Tyrosine 341 is a binding site for substrate. Tyrosine 371 serves as the catalytic For cyclooxygenase activity. Position 374 (histidine 374) interacts with heme b. N-linked (GlcNAc...) asparagine glycosylation occurs at asparagine 396. At cysteine 526 the chain carries S-nitrosocysteine. Cysteine 555 and cysteine 561 are disulfide-bonded. Serine 565 carries the post-translational modification O-acetylserine; by SPHK1. N-linked (GlcNAc...) asparagine glycosylation occurs at asparagine 580.

Belongs to the prostaglandin G/H synthase family. As to quaternary structure, homodimer. The cofactor is heme b. Post-translationally, S-nitrosylation by NOS2 (iNOS) activates enzyme activity. S-nitrosylation may take place on different Cys residues in addition to Cys-526. In terms of processing, acetylated at Ser-565 by SPHK1. During neuroinflammation, acetylation by SPHK1 promotes neuronal secretion of specialized preresolving mediators (SPMs), especially 15-R-lipoxin A4, which results in an increase of phagocytic microglia. As to expression, following colon injury, expressed in the wound bed mesenchyme during the first phase of repair, probably by colonic mesenchymal stem cells (at protein level).

Its subcellular location is the microsome membrane. The protein localises to the endoplasmic reticulum membrane. It localises to the nucleus inner membrane. It is found in the nucleus outer membrane. The catalysed reaction is (5Z,8Z,11Z,14Z)-eicosatetraenoate + AH2 + 2 O2 = prostaglandin H2 + A + H2O. It catalyses the reaction (5Z,8Z,11Z,14Z)-eicosatetraenoate + 2 O2 = prostaglandin G2. It carries out the reaction prostaglandin G2 + AH2 = prostaglandin H2 + A + H2O. The enzyme catalyses (5Z,8Z,11Z,14Z,17Z)-eicosapentaenoate + 2 O2 = prostaglandin G3. The catalysed reaction is prostaglandin G3 + AH2 = prostaglandin H3 + A + H2O. It catalyses the reaction (8Z,11Z,14Z)-eicosatrienoate + 2 O2 = prostaglandin G1. It carries out the reaction prostaglandin G1 + AH2 = prostaglandin H1 + A + H2O. The enzyme catalyses 2-(5Z,8Z,11Z,14Z)-eicosatetraenoyl-sn-glycero-3-phosphoethanolamine + 2 O2 = 2-(prostaglandin G2)-sn-glycero-3-phosphoethanolamine. The catalysed reaction is 2-(prostaglandin G2)-sn-glycero-3-phosphoethanolamine + AH2 = 2-(prostaglandin H2)-sn-glycero-3-phosphoethanolamine + A + H2O. It catalyses the reaction 2-(5Z,8Z,11Z,14Z)-eicosatetraenoyl-sn-glycero-3-phosphocholine + 2 O2 = 2-(prostaglandin G2)-sn-glycero-3-phosphocholine. It carries out the reaction 2-(prostaglandin G2)-sn-glycero-3-phosphocholine + AH2 = 2-(prostaglandin H2)-sn-glycero-3-phosphocholine + A + H2O. The enzyme catalyses (15S)-hydroperoxy-(5Z,8Z,11Z,13E)-eicosatetraenoate + AH2 = (15S)-hydroxy-(5Z,8Z,11Z,13E)-eicosatetraenoate + A + H2O. The catalysed reaction is 2-(5Z,8Z,11Z,14Z)-eicosatetraenoyl-sn-glycero-3-phosphocholine + AH2 + O2 = 2-[(15S)-hydroxy-(5Z,8Z,11Z,13E)-eicosatetraenoyl]-sn-glycero-3-phosphocholine + A + H2O. It catalyses the reaction 2-(5Z,8Z,11Z,14Z)-eicosatetraenoyl-sn-glycero-3-phosphocholine + AH2 + O2 = 2-[(15R)-hydroxy-(5Z,8Z,11Z,13E)-eicosatetraenoyl]-sn-glycero-3-phosphocholine + A + H2O. It carries out the reaction 2-(5Z,8Z,11Z,14Z)-eicosatetraenoyl-sn-glycero-3-phosphocholine + AH2 + O2 = 2-[(11R)-hydroxy-(5Z,8Z,12E,14Z)-eicosatetraenoyl]-sn-glycero-3-phosphocholine + A + H2O. The enzyme catalyses (9Z,12Z)-octadecadienoate + AH2 + O2 = 9-hydroxy-(10E,12Z)-octadecadienoate + A + H2O. The catalysed reaction is (9Z,12Z)-octadecadienoate + AH2 + O2 = 13-hydroxy-(9Z,11E)-octadecadienoate + A + H2O. It catalyses the reaction (5Z,8Z,11Z,14Z)-eicosatetraenoate + AH2 + O2 = (15R)-hydroxy-(5Z,8Z,11Z,13E)-eicosatetraenoate + A + H2O. It carries out the reaction (5Z,8Z,11Z,14Z)-eicosatetraenoate + AH2 + O2 = (11R)-hydroxy-(5Z,8Z,12E,14Z)-eicosatetraenoate + A + H2O. The enzyme catalyses (5Z,8Z,11Z,14Z,17Z)-eicosapentaenoate + AH2 + O2 = (11R)-hydroxy-(5Z,8Z,12E,14Z,17Z)-eicosapentaenoate + A + H2O. The catalysed reaction is (5Z,8Z,11Z,14Z,17Z)-eicosapentaenoate + AH2 + O2 = (18S)-hydroxy-(5Z,8Z,11Z,14Z,16E)-eicosapentaenoate + A + H2O. It catalyses the reaction (5Z,8Z,11Z,14Z,17Z)-eicosapentaenoate + AH2 + O2 = (18R)-hydroxy-(5Z,8Z,11Z,14Z,16E)-eicosapentaenoate + A + H2O. It carries out the reaction (5Z,8Z,11Z,14Z,17Z)-eicosapentaenoate + AH2 + O2 = (15R)-hydroxy-(5Z,8Z,11Z,13E,17Z)-eicosapentaenoate + A + H2O. The enzyme catalyses (5Z,8Z,11Z,14Z,17Z)-eicosapentaenoate + AH2 + O2 = (15S)-hydroxy-(5Z,8Z,11Z,13E,17Z)-eicosapentaenoate + A + H2O. The catalysed reaction is (7Z,10Z,13Z,16Z,19Z)-docosapentaenoate + AH2 + O2 = 13R-hydroxy-(7Z,10Z,14E,16Z,19Z)-docosapentaenoate + A + H2O. It catalyses the reaction (4Z,7Z,10Z,13Z,16Z,19Z)-docosahexaenoate + AH2 + O2 = 13-hydroxy-(4Z,7Z,10Z,14E,16Z,19Z)-docosahexaenoate + A + H2O. It carries out the reaction (5S)-hydroxy-(6E,8Z,11Z,14Z)-eicosatetraenoate + AH2 + O2 = (5S,15R)-dihydroxy-(6E,8Z,11Z,13E)-eicosatetraenoate + A + H2O. The enzyme catalyses (4Z,7Z,10Z,13Z,16Z,19Z)-docosahexaenoate + AH2 + O2 = 17R-hydroxy-(4Z,7Z,10Z,13Z,15E,19Z)-docosahexaenoate + A + H2O. The catalysed reaction is (5S)-hydroxy-(6E,8Z,11Z,14Z)-eicosatetraenoate + AH2 + O2 = (5S,15S)-dihydroxy-(6E,8Z,11Z,13E)-eicosatetraenoate + A + H2O. It catalyses the reaction (5S)-hydroxy-(6E,8Z,11Z,14Z)-eicosatetraenoate + AH2 + O2 = (5S,11R)-dihydroxy-(6E,8Z,12E,14Z)-eicosatetraenoate + A + H2O. It carries out the reaction 2-(5Z,8Z,11Z,14Z-eicosatetraenoyl)-glycerol + 2 O2 = 2-glyceryl-prostaglandin G2. The enzyme catalyses 2-glyceryl-prostaglandin G2 + AH2 = 2-glyceryl-prostaglandin H2 + A + H2O. The catalysed reaction is (5Z,8Z,11Z,14Z)-eicosatetraenoate + O2 = (15R)-hydroperoxy-(5Z,8Z,11Z,13E)-eicosatetraenoate. It catalyses the reaction (5Z,8Z,11Z,14Z)-eicosatetraenoate + O2 = 11R-hydroperoxy-(5Z,8Z,12E,14Z)-eicosatetraenoate. It carries out the reaction (9Z,12Z)-octadecadienoate + AH2 + O2 = (9R)-hydroxy-(10E,12Z)-octadecadienoate + A + H2O. The enzyme catalyses (9Z,12Z)-octadecadienoate + AH2 + O2 = (9S)-hydroxy-(10E,12Z)-octadecadienoate + A + H2O. The catalysed reaction is (9Z,12Z)-octadecadienoate + AH2 + O2 = (13S)-hydroxy-(9Z,11E)-octadecadienoate + A + H2O. It catalyses the reaction (9Z,12Z)-octadecadienoate + AH2 + O2 = (13R)-hydroxy-(9Z,11E)-octadecadienoate + A + H2O. Its pathway is lipid metabolism; prostaglandin biosynthesis. Its activity is regulated as follows. Inhibited by the nonsteroidal anti-inflammatory drugs aspirin, naproxen, diclofenac, meclofenamic acid, indomethacin and their analogs. Dual cyclooxygenase and peroxidase in the biosynthesis pathway of prostanoids, a class of C20 oxylipins mainly derived from arachidonate, with a particular role in the inflammatory response. The cyclooxygenase activity oxygenates arachidonate (AA, C20:4(n-6)) to the hydroperoxy endoperoxide prostaglandin G2 (PGG2), and the peroxidase activity reduces PGG2 to the hydroxy endoperoxide PGH2, the precursor of all 2-series prostaglandins and thromboxanes. This complex transformation is initiated by abstraction of hydrogen at carbon 13 (with S-stereochemistry), followed by insertion of molecular O2 to form the endoperoxide bridge between carbon 9 and 11 that defines prostaglandins. The insertion of a second molecule of O2 (bis-oxygenase activity) yields a hydroperoxy group in PGG2 that is then reduced to PGH2 by two electrons. Similarly catalyzes successive cyclooxygenation and peroxidation of dihomo-gamma-linoleate (DGLA, C20:3(n-6)) and eicosapentaenoate (EPA, C20:5(n-3)) to corresponding PGH1 and PGH3, the precursors of 1- and 3-series prostaglandins. In an alternative pathway of prostanoid biosynthesis, converts 2-arachidonoyl lysophopholipids to prostanoid lysophopholipids, which are then hydrolyzed by intracellular phospholipases to release free prostanoids. Metabolizes 2-arachidonoyl glycerol yielding the glyceryl ester of PGH2, a process that can contribute to pain response. Generates lipid mediators from n-3 and n-6 polyunsaturated fatty acids (PUFAs) via a lipoxygenase-type mechanism. Oxygenates PUFAs to hydroperoxy compounds and then reduces them to corresponding alcohols. Plays a role in the generation of resolution phase interaction products (resolvins) during both sterile and infectious inflammation. Metabolizes docosahexaenoate (DHA, C22:6(n-3)) to 17R-HDHA, a precursor of the D-series resolvins (RvDs). As a component of the biosynthetic pathway of E-series resolvins (RvEs), converts eicosapentaenoate (EPA, C20:5(n-3)) primarily to 18S-HEPE that is further metabolized by ALOX5 and LTA4H to generate 18S-RvE1 and 18S-RvE2. In vascular endothelial cells, converts docosapentaenoate (DPA, C22:5(n-3)) to 13R-HDPA, a precursor for 13-series resolvins (RvTs) shown to activate macrophage phagocytosis during bacterial infection. In activated leukocytes, contributes to oxygenation of hydroxyeicosatetraenoates (HETE) to diHETES (5,15-diHETE and 5,11-diHETE). Can also use linoleate (LA, (9Z,12Z)-octadecadienoate, C18:2(n-6)) as substrate and produce hydroxyoctadecadienoates (HODEs) in a regio- and stereospecific manner, being (9R)-HODE ((9R)-hydroxy-(10E,12Z)-octadecadienoate) and (13S)-HODE ((13S)-hydroxy-(9Z,11E)-octadecadienoate) its major products. During neuroinflammation, plays a role in neuronal secretion of specialized preresolving mediators (SPMs) 15R-lipoxin A4 that regulates phagocytic microglia. The sequence is that of Prostaglandin G/H synthase 2 from Mus musculus (Mouse).